The primary structure comprises 821 residues: Leucine--tRNA ligase (821 aa).

The short motif at 44-54 (PYPSGRIHMGH) is the 'HIGH' region element. Residues 589 to 593 (KMSKS) carry the 'KMSKS' region motif. Lys592 provides a ligand contact to ATP.

This sequence belongs to the class-I aminoacyl-tRNA synthetase family.

Its subcellular location is the cytoplasm. It carries out the reaction tRNA(Leu) + L-leucine + ATP = L-leucyl-tRNA(Leu) + AMP + diphosphate. The protein is Leucine--tRNA ligase of Campylobacter curvus (strain 525.92).